We begin with the raw amino-acid sequence, 126 residues long: Holo-[acyl-carrier-protein] synthase (126 aa).

Mg(2+) contacts are provided by Asp-6 and Glu-55.

The protein belongs to the P-Pant transferase superfamily. AcpS family. The cofactor is Mg(2+).

The protein localises to the cytoplasm. The catalysed reaction is apo-[ACP] + CoA = holo-[ACP] + adenosine 3',5'-bisphosphate + H(+). Transfers the 4'-phosphopantetheine moiety from coenzyme A to a Ser of acyl-carrier-protein. In Chlorobium limicola (strain DSM 245 / NBRC 103803 / 6330), this protein is Holo-[acyl-carrier-protein] synthase.